We begin with the raw amino-acid sequence, 428 residues long: Elongation factor 1-alpha (428 aa).

Residues 5-215 (KPHVNIVFIG…ALDQIPEPPK (211 aa)) form the tr-type G domain. The tract at residues 14–21 (GHVDHGKS) is G1. 14–21 (GHVDHGKS) is a binding site for GTP. Residue Ser21 participates in Mg(2+) binding. The tract at residues 68–72 (GITID) is G2. Residues 89 to 92 (DAPG) are G3. GTP-binding positions include 89–93 (DAPGH) and 144–147 (NKMD). The segment at 144–147 (NKMD) is G4. The interval 181–183 (SAW) is G5.

The protein belongs to the TRAFAC class translation factor GTPase superfamily. Classic translation factor GTPase family. EF-Tu/EF-1A subfamily.

It localises to the cytoplasm. It catalyses the reaction GTP + H2O = GDP + phosphate + H(+). GTP hydrolase that promotes the GTP-dependent binding of aminoacyl-tRNA to the A-site of ribosomes during protein biosynthesis. The chain is Elongation factor 1-alpha from Thermococcus gammatolerans (strain DSM 15229 / JCM 11827 / EJ3).